The following is a 41-amino-acid chain: Trypsin inhibitor (41 aa).

Intrachain disulfides connect Cys-15-Cys-26, Cys-17-Cys-24, and Cys-29-Cys-37.

Its function is as follows. Has two active sites that simultaneously bind and inhibit trypsin. This is Trypsin inhibitor from Trichosanthes kirilowii (Chinese snake gourd).